A 274-amino-acid chain; its full sequence is uncharacterized protein (274 aa).

Positions 1-17 are enriched in low complexity; that stretch reads MTQLTNFSESFSNQNSN. Disordered regions lie at residues 1–38 and 222–274; these read MTQL…YYVR and ELGT…MEFE. Residues 18-28 are compositionally biased toward polar residues; the sequence is LHQPYNFNSHQ. The span at 29-38 shows a compositional bias: basic and acidic residues; it reads PPEENHYYVR. Polar residues-rich tracts occupy residues 239–249 and 256–265; these read PMASPTGSSQI and SPNSLTNGSV.

This is an uncharacterized protein from Caenorhabditis elegans.